Consider the following 54-residue polypeptide: Ovomucoid (54 aa).

The 51-residue stretch at 4–54 (VDCSDYPKPACSLDYMPLCGSDSKTYSNKCNFCNAVVDSNGTLTLSHFEKC) folds into the Kazal-like domain. Disulfide bonds link Cys-6/Cys-36, Cys-14/Cys-33, and Cys-22/Cys-54. The N-linked (GlcNAc...) asparagine glycan is linked to Asn-43.

The protein localises to the secreted. In Chroicocephalus ridibundus (Black-headed gull), this protein is Ovomucoid.